Reading from the N-terminus, the 495-residue chain is Adenosylhomocysteinase (495 aa).

Residues Thr71, Asp156, and Glu218 each coordinate substrate. Thr219–Thr221 serves as a coordination point for NAD(+). Substrate contacts are provided by Lys248 and Asp252. NAD(+)-binding positions include Asn253, Gly282–Gly287, Glu305, Asn340, Ile361–His363, and Asn409.

Belongs to the adenosylhomocysteinase family. Requires NAD(+) as cofactor.

It localises to the cytoplasm. The catalysed reaction is S-adenosyl-L-homocysteine + H2O = L-homocysteine + adenosine. Its pathway is amino-acid biosynthesis; L-homocysteine biosynthesis; L-homocysteine from S-adenosyl-L-homocysteine: step 1/1. In terms of biological role, may play a key role in the regulation of the intracellular concentration of adenosylhomocysteine. This chain is Adenosylhomocysteinase, found in Mycobacterium tuberculosis (strain ATCC 25177 / H37Ra).